We begin with the raw amino-acid sequence, 508 residues long: Putative inorganic phosphate transporter 1-13 (508 aa).

The Cytoplasmic segment spans residues 1 to 22 (MAGNQQLRVLHALDIARTQLYH). The helical transmembrane segment at 23 to 43 (FIAIVIAGMGFFTDAYDLFSI) threads the bilayer. At 44–64 (SLVADLLGHVYYHGELPRNIH) the chain is on the extracellular side. Residues 65–85 (AAVTGIALCGTVPGQLVFGWL) form a helical membrane-spanning segment. The Cytoplasmic segment spans residues 86–93 (GDKMGRKR). A helical transmembrane segment spans residues 94 to 114 (VYGITLLLMVVSSLASGLSFS). At 115-117 (KHE) the chain is on the extracellular side. Residues 118–138 (GMNIIAVLCFFRFWLGVSIGG) traverse the membrane as a helical segment. The Cytoplasmic portion of the chain corresponds to 139-159 (DYPLSATIMSEYANKRTRGAF). A helical transmembrane segment spans residues 160-180 (IAAVFAMQGFGNLAAGIIGMI). Residues 181–192 (VSAAFKHSSASK) lie on the Extracellular side of the membrane. A helical membrane pass occupies residues 193–213 (IDYAWRIILMFGAIPAALTYH). Topologically, residues 214–277 (WRMKMPETAR…FEFLHRHGLH (64 aa)) are cytoplasmic. A helical membrane pass occupies residues 278 to 298 (LLGTTVCWFVLDVTFYSLNIF). The Extracellular segment spans residues 299–328 (MKNIFTEVGLLPRLDSEYHHTLQRMITMTA). Residues 329 to 349 (VHTFISLCGALPGYFFTVAFV) traverse the membrane as a helical segment. Over 350–354 (DRIGR) the chain is Cytoplasmic. The chain crosses the membrane as a helical span at residues 355–375 (VKIQLIGFTMMTVFMLCLAIP). The Extracellular portion of the chain corresponds to 376-389 (YDQWLRHKNKYGFA). The helical transmembrane segment at 390-410 (VMYGLTFFFANFGPNTTTFII) threads the bilayer. Residues 411-424 (PAEIFPARLRSTCH) lie on the Cytoplasmic side of the membrane. A helical membrane pass occupies residues 425-445 (GISGAVGKIGAIVGVFGFLYT). Topologically, residues 446 to 450 (EYHIR) are extracellular. The helical transmembrane segment at 451–471 (IFLFVLIGCNLVGFIFTLLLP) threads the bilayer. At 472 to 508 (ESKGKSLEDLTGEIEEFQEEDEGSEVALSRPIHTVPL) the chain is on the cytoplasmic side.

This sequence belongs to the major facilitator superfamily. Phosphate:H(+) symporter (TC 2.A.1.9) family.

It is found in the membrane. Functionally, high-affinity transporter for external inorganic phosphate. The chain is Putative inorganic phosphate transporter 1-13 (PHT1-13) from Oryza sativa subsp. japonica (Rice).